A 697-amino-acid chain; its full sequence is Polyribonucleotide nucleotidyltransferase (697 aa).

Mg(2+) contacts are provided by aspartate 484 and aspartate 490. The region spanning 551–610 (PRITTIWVKTDKIRDVIGSGGKNIRGITEATGVSIDIEDSGRINIASTSKEACDKAIKMI) is the KH domain. In terms of domain architecture, S1 motif spans 620 to 688 (GKLYMGTVKK…KQGKIKLSRK (69 aa)).

This sequence belongs to the polyribonucleotide nucleotidyltransferase family. Requires Mg(2+) as cofactor.

It is found in the cytoplasm. It carries out the reaction RNA(n+1) + phosphate = RNA(n) + a ribonucleoside 5'-diphosphate. Functionally, involved in mRNA degradation. Catalyzes the phosphorolysis of single-stranded polyribonucleotides processively in the 3'- to 5'-direction. The protein is Polyribonucleotide nucleotidyltransferase of Geobacter sulfurreducens (strain ATCC 51573 / DSM 12127 / PCA).